The following is a 260-amino-acid chain: MGQKIHPVGFRLGITQEHQSRWFAEPSRYPELLQEDHKLRQYIEQKLGRLAQNNAGISEVRIERKADQIDLEVRTARPGVVVGRGGQGIEALRTGLQTLLGGNRQIRINVVEVQRVDADAYLIAEFIAQQLERRVSFRRVVRQAIQRAQKAGIQGIKVQVSGRLNGAEIARTEWTREGRVPLHTLRADIDYSYCTAKTVYGILGIKVWVFKGEIIPGQEVAAPPPSTRDRDRDRGDRDREPRRRQQQRRRQQFEDRSNEG.

The region spanning 39-114 (LRQYIEQKLG…QIRINVVEVQ (76 aa)) is the KH type-2 domain. The tract at residues 219 to 260 (EVAAPPPSTRDRDRDRGDRDREPRRRQQQRRRQQFEDRSNEG) is disordered. 2 stretches are compositionally biased toward basic and acidic residues: residues 227-243 (TRDR…EPRR) and 251-260 (QQFEDRSNEG).

Belongs to the universal ribosomal protein uS3 family. Part of the 30S ribosomal subunit. Forms a tight complex with proteins S10 and S14.

Functionally, binds the lower part of the 30S subunit head. Binds mRNA in the 70S ribosome, positioning it for translation. This is Small ribosomal subunit protein uS3 from Trichormus variabilis (strain ATCC 29413 / PCC 7937) (Anabaena variabilis).